Reading from the N-terminus, the 91-residue chain is Small ribosomal subunit protein uS19 (91 aa).

This sequence belongs to the universal ribosomal protein uS19 family.

In terms of biological role, protein S19 forms a complex with S13 that binds strongly to the 16S ribosomal RNA. In Parasynechococcus marenigrum (strain WH8102), this protein is Small ribosomal subunit protein uS19.